The chain runs to 504 residues: Occludin (504 aa).

The Cytoplasmic portion of the chain corresponds to 1-57 (MFSKKSYDGPPAGYGPPTGYGAPTADYGYGSPPPGSYYVDDAPQLFYKWTSPPGAVR). The region spanning 51-253 (SPPGAVRGLQ…ICFFAQKTRS (203 aa)) is the MARVEL domain. A helical membrane pass occupies residues 58–80 (GLQAGVLVLCIAIFACVASTLAW). The Extracellular segment spans residues 81 to 123 (DYGYGLGGAYGTGLGGFYGSNYYGSGLSYSYGYGGYYGGVNQR). A helical membrane pass occupies residues 124 to 148 (TANGFMIAMAVLCFLAQLGLLVAAL). Residues 149-158 (SKSGATRSRR) are Cytoplasmic-facing. A helical transmembrane segment spans residues 159-183 (FYLAVLVLSAVLAFVMLIASIVYIM). Residues 184-227 (GVNPQAQMSSGYYYSPLLAMCSQAYGSTYLNQYIYHYCTVDPQE) lie on the Extracellular side of the membrane. A disulfide bond links Cys-204 and Cys-221. Residues 228-249 (AVAAVCGFLIVILLCLICFFAQ) traverse the membrane as a helical segment. Residues 250 to 504 (KTRSKIWRYG…MVSAYDKVRG (255 aa)) lie on the Cytoplasmic side of the membrane. Residues 324 to 396 (PSGTYSSRGD…VESSDERDQE (73 aa)) are disordered. Residues 361 to 370 (PARRGRRRRR) are compositionally biased toward basic residues. Tyr-379 and Tyr-383 each carry phosphotyrosine. The interaction with TJP1 stretch occupies residues 379 to 385 (YETDYTT). In terms of domain architecture, OCEL spans 396-504 (EQWASLYPPI…MVSAYDKVRG (109 aa)). Residues 412–471 (QRYKQEFDTDLKRYKQLCAEMDSINDRLNQLSRRLDSITEDSPQYQDVAEEYNQLKDLKR) are a coiled coil.

It belongs to the ELL/occludin family. As to quaternary structure, interacts with TJP1 and TJP3. Post-translationally, phosphorylated. Localized at tight junctions of both epithelial and endothelial cells. Highly expressed in lung and liver. Expressed at a lower level in brain.

It is found in the cell membrane. The protein localises to the cell junction. The protein resides in the tight junction. May play a role in the formation and regulation of the tight junction (TJ) paracellular permeability barrier. Interacts with ZO-1. In Gallus gallus (Chicken), this protein is Occludin (OCLN).